An 82-amino-acid polypeptide reads, in one-letter code: Putative defensin-like protein 134 (82 aa).

Positions 1–26 are cleaved as a signal peptide; sequence MEVRSLNLCFLLVLVLLMSPAPTAVA. 4 cysteine pairs are disulfide-bonded: cysteine 32–cysteine 79, cysteine 42–cysteine 68, cysteine 47–cysteine 74, and cysteine 51–cysteine 76.

This sequence belongs to the DEFL family.

The protein resides in the secreted. This chain is Putative defensin-like protein 134, found in Arabidopsis thaliana (Mouse-ear cress).